Reading from the N-terminus, the 258-residue chain is Acetylglutamate kinase (258 aa).

Substrate contacts are provided by residues 40-41 (GG), Arg62, and Asn158.

It belongs to the acetylglutamate kinase family. ArgB subfamily.

The protein localises to the cytoplasm. It catalyses the reaction N-acetyl-L-glutamate + ATP = N-acetyl-L-glutamyl 5-phosphate + ADP. It functions in the pathway amino-acid biosynthesis; L-arginine biosynthesis; N(2)-acetyl-L-ornithine from L-glutamate: step 2/4. In terms of biological role, catalyzes the ATP-dependent phosphorylation of N-acetyl-L-glutamate. The chain is Acetylglutamate kinase from Azobacteroides pseudotrichonymphae genomovar. CFP2.